Consider the following 365-residue polypeptide: 2-aminoethylphosphonate--pyruvate transaminase (365 aa).

At Lys-194 the chain carries N6-(pyridoxal phosphate)lysine.

It belongs to the class-V pyridoxal-phosphate-dependent aminotransferase family. PhnW subfamily. As to quaternary structure, homodimer. The cofactor is pyridoxal 5'-phosphate.

It carries out the reaction (2-aminoethyl)phosphonate + pyruvate = phosphonoacetaldehyde + L-alanine. Involved in phosphonate degradation. This is 2-aminoethylphosphonate--pyruvate transaminase from Bacillus cereus (strain ATCC 10987 / NRS 248).